The sequence spans 395 residues: RNA demethylase ALKBH5 (395 aa).

Disordered stretches follow at residues 1-28 (MAAA…AGSR) and 47-83 (AAEP…EEEA). Ala2 is modified (N-acetylalanine). Lys58 is covalently cross-linked (Glycyl lysine isopeptide (Lys-Gly) (interchain with G-Cter in ubiquitin)). Over residues 60-83 (KYQEDSDPERSDYEEHQLQKEEEA) the composition is skewed to basic and acidic residues. Phosphoserine is present on residues Ser65 and Ser70. The stretch at 68–117 (ERSDYEEHQLQKEEEARKVKSGIRQIRLFSQDECSKIEARIDEVVSRAEK) forms a coiled coil. Phosphotyrosine is present on Tyr72. Lys87 participates in a covalent cross-link: Glycyl lysine isopeptide (Lys-Gly) (interchain with G-Cter in SUMO1). Ser88 is subject to Phosphoserine. Lys133 is subject to N6-acetyllysine. Tyr140 is a catalytic residue. Residues Asn194, Tyr196, and His205 each contribute to the 2-oxoglutarate site. Cys231 and Cys268 are oxidised to a cystine. Lys236 carries the N6-acetyllysine modification. 2-oxoglutarate-binding residues include His267 and Arg278. The disordered stretch occupies residues 294–395 (ETKSLSSSTL…PTRKVKMRRH (102 aa)). Residues 296–306 (KSLSSSTLPPS) show a composition bias toward low complexity. Residue Lys322 forms a Glycyl lysine isopeptide (Lys-Gly) (interchain with G-Cter in SUMO1) linkage. Phosphoserine is present on Ser326. Residue Lys329 forms a Glycyl lysine isopeptide (Lys-Gly) (interchain with G-Cter in SUMO2) linkage. Residues 329–350 (KADPDAAHRPRILEMDKEENRR) are compositionally biased toward basic and acidic residues. Omega-N-methylarginine is present on Arg360. 4 positions are modified to phosphoserine: Ser362, Ser372, Ser375, and Ser385.

The protein belongs to the alkB family. As to quaternary structure, monomer. Interacts with RBM33; promoting desumoylation by SENP1 and recruitment to N(6)-methyladenosine-containing mRNAs. Interacts (when acetylated by KAT8) with PSPC1; interaction facilitates recognition of N(6)-methyladenosine (m6A) mRNA. Fe(2+) is required as a cofactor. Phosphorylated at Ser-88 and Ser-326 in response to reactive oxygen species (ROS), promoting sumoylation and inactivation. Post-translationally, acetylated by KAT8 at Lys-236, promoting interaction with PSPC1, thereby facilitating recognition of N(6)-methyladenosine (m6A) mRNA by ALKBH5. Deacetylated at Lys-236 by HDAC7. In terms of processing, sumoylated at Lys-87 and Lys-322 by PIAS4 following phosphorylation at Ser-88 and Ser-326 in response to reactive oxygen species (ROS), inhibiting the RNA demethylase activity. Desumoylated by SENP1; relieving RNA demethylase inhibition, leading to N(6)-methyladenosine-containing mRNAs demethylation. Ubiquitinated at Lys-58 via 'Lys-48'-linked polyubiquitin chain, leading to its degradation by the proteasome. Deubiquitinated at Lys-58 by USP9X, promoting its stabilizazion. As to expression, widely expressed, with highest expression in testis. In testis, present in almost all testicular cell types except elongating and elongated spermatids (at protein level). Among spermatogenic cells, present at high level in spermatocytes; medium levels in spermatogonia and lower levels in round spermatids (at protein level).

It is found in the nucleus speckle. It carries out the reaction an N(6)-methyladenosine in mRNA + 2-oxoglutarate + O2 = an adenosine in mRNA + formaldehyde + succinate + CO2. With respect to regulation, RNA demethylase activity is inhibited following sumoylation. Inhibition is relieved following desumoylation. Inhibited by histone demethylase inhibitor IOX1. Its function is as follows. Dioxygenase that specifically demethylates N(6)-methyladenosine (m6A) RNA, the most prevalent internal modification of messenger RNA (mRNA) in higher eukaryotes. Demethylates RNA by oxidative demethylation, which requires molecular oxygen, alpha-ketoglutarate and iron. Demethylation of m6A mRNA affects mRNA processing, translation and export. Can also demethylate N(6)-methyladenosine in single-stranded DNA (in vitro). Required for the late meiotic and haploid phases of spermatogenesis by mediating m6A demethylation in spermatocytes and round spermatids: m6A demethylation of target transcripts is required for correct splicing and the production of longer 3'-UTR mRNAs in male germ cells. Involved in paraspeckle assembly, a nuclear membraneless organelle, by undergoing liquid-liquid phase separation. Paraspeckle assembly is coupled with m6A demethylation of RNAs, such as NEAT1 non-coding RNA. Also acts as a negative regulator of T-cell development: inhibits gamma-delta T-cell proliferation via demethylation of JAG1 and NOTCH2 transcripts. Inhibits regulatory T-cell (Treg) recruitment by mediating demethylation and destabilization of CCL28 mRNAs. In Mus musculus (Mouse), this protein is RNA demethylase ALKBH5.